A 178-amino-acid polypeptide reads, in one-letter code: Cytochrome b6-f complex iron-sulfur subunit (178 aa).

Residues 20 to 42 (LLTFGSVTGVALGALYPVVNYFI) form a helical membrane-spanning segment. The 97-residue stretch at 65–161 (ASGWLADHKE…VNVENDNVFV (97 aa)) folds into the Rieske domain. [2Fe-2S] cluster-binding residues include cysteine 107, histidine 109, cysteine 125, and histidine 128. A disulfide bridge links cysteine 112 with cysteine 127.

Belongs to the Rieske iron-sulfur protein family. The 4 large subunits of the cytochrome b6-f complex are cytochrome b6, subunit IV (17 kDa polypeptide, PetD), cytochrome f and the Rieske protein, while the 4 small subunits are PetG, PetL, PetM and PetN. The complex functions as a dimer. [2Fe-2S] cluster is required as a cofactor.

The protein localises to the cellular thylakoid membrane. The catalysed reaction is 2 oxidized [plastocyanin] + a plastoquinol + 2 H(+)(in) = 2 reduced [plastocyanin] + a plastoquinone + 4 H(+)(out). In terms of biological role, component of the cytochrome b6-f complex, which mediates electron transfer between photosystem II (PSII) and photosystem I (PSI), cyclic electron flow around PSI, and state transitions. The polypeptide is Cytochrome b6-f complex iron-sulfur subunit (Synechococcus sp. (strain RCC307)).